The primary structure comprises 539 residues: Phosphoenolpyruvate carboxykinase (ATP) (539 aa).

Residues Arg-64, Tyr-206, and Lys-212 each coordinate substrate. Residues Lys-212, His-231, and 247–255 (GLSGTGKTT) contribute to the ATP site. Residues Lys-212 and His-231 each contribute to the Mn(2+) site. Asp-268 serves as a coordination point for Mn(2+). ATP contacts are provided by residues Glu-296, Arg-332, 448–449 (RI), and Thr-454. Arg-332 lines the substrate pocket.

This sequence belongs to the phosphoenolpyruvate carboxykinase (ATP) family. As to quaternary structure, monomer. It depends on Mn(2+) as a cofactor.

Its subcellular location is the cytoplasm. It carries out the reaction oxaloacetate + ATP = phosphoenolpyruvate + ADP + CO2. It functions in the pathway carbohydrate biosynthesis; gluconeogenesis. Its function is as follows. Involved in the gluconeogenesis. Catalyzes the conversion of oxaloacetate (OAA) to phosphoenolpyruvate (PEP) through direct phosphoryl transfer between the nucleoside triphosphate and OAA. The polypeptide is Phosphoenolpyruvate carboxykinase (ATP) (Pectobacterium carotovorum subsp. carotovorum (strain PC1)).